A 195-amino-acid chain; its full sequence is Triosephosphate isomerase, cytosolic (195 aa).

Residue H37 is the Electrophile of the active site. The Proton acceptor role is filled by E107.

It belongs to the triosephosphate isomerase family. As to quaternary structure, homodimer.

Its subcellular location is the cytoplasm. It catalyses the reaction D-glyceraldehyde 3-phosphate = dihydroxyacetone phosphate. It functions in the pathway carbohydrate biosynthesis; gluconeogenesis. Its pathway is carbohydrate degradation; glycolysis; D-glyceraldehyde 3-phosphate from glycerone phosphate: step 1/1. This is Triosephosphate isomerase, cytosolic from Lactuca sativa (Garden lettuce).